We begin with the raw amino-acid sequence, 114 residues long: UPF0102 protein HPG27_782 (114 aa).

The protein belongs to the UPF0102 family.

This chain is UPF0102 protein HPG27_782, found in Helicobacter pylori (strain G27).